A 141-amino-acid chain; its full sequence is UPF0179 protein Cmaq_1008 (141 aa).

Belongs to the UPF0179 family.

The protein is UPF0179 protein Cmaq_1008 of Caldivirga maquilingensis (strain ATCC 700844 / DSM 13496 / JCM 10307 / IC-167).